A 122-amino-acid chain; its full sequence is Large ribosomal subunit protein uL14 (122 aa).

The protein belongs to the universal ribosomal protein uL14 family. In terms of assembly, part of the 50S ribosomal subunit. Forms a cluster with proteins L3 and L19. In the 70S ribosome, L14 and L19 interact and together make contacts with the 16S rRNA in bridges B5 and B8.

Functionally, binds to 23S rRNA. Forms part of two intersubunit bridges in the 70S ribosome. The polypeptide is Large ribosomal subunit protein uL14 (Bifidobacterium adolescentis (strain ATCC 15703 / DSM 20083 / NCTC 11814 / E194a)).